We begin with the raw amino-acid sequence, 100 residues long: MRVYHHIYVYTYILSAVIYSQDLFPSWVVQLSTVKSDIIRPYLIHGNSFLFQILQVLITAPSTRCKFSFQNSIPFIFLALLLSQDFHVFLGIELHAFFVS.

3 helical membrane passes run 9-29 (VYTY…SWVV), 41-61 (PYLI…ITAP), and 72-92 (SIPF…FLGI).

It is found in the membrane. This is an uncharacterized protein from Saccharomyces cerevisiae (strain ATCC 204508 / S288c) (Baker's yeast).